We begin with the raw amino-acid sequence, 429 residues long: Ribosomal RNA small subunit methyltransferase B (429 aa).

S-adenosyl-L-methionine contacts are provided by residues 254 to 260 (CAAPGGK), aspartate 277, aspartate 303, and aspartate 322. Cysteine 375 (nucleophile) is an active-site residue.

This sequence belongs to the class I-like SAM-binding methyltransferase superfamily. RsmB/NOP family.

The protein localises to the cytoplasm. The enzyme catalyses cytidine(967) in 16S rRNA + S-adenosyl-L-methionine = 5-methylcytidine(967) in 16S rRNA + S-adenosyl-L-homocysteine + H(+). In terms of biological role, specifically methylates the cytosine at position 967 (m5C967) of 16S rRNA. In Escherichia fergusonii (strain ATCC 35469 / DSM 13698 / CCUG 18766 / IAM 14443 / JCM 21226 / LMG 7866 / NBRC 102419 / NCTC 12128 / CDC 0568-73), this protein is Ribosomal RNA small subunit methyltransferase B.